The following is a 179-amino-acid chain: Ubiquitin-conjugating enzyme E2 C (179 aa).

The segment at 1–31 (MASQNRDPAATSVAAARKGAEPSGGAARGPV) is disordered. A2 is subject to N-acetylalanine. S3 carries the post-translational modification Phosphoserine. Residues 30–175 (PVGKRLQQEL…LQETYSKQVT (146 aa)) form the UBC core domain. C114 acts as the Glycyl thioester intermediate in catalysis.

This sequence belongs to the ubiquitin-conjugating enzyme family. Component of the APC/C complex, composed of at least 14 distinct subunits that assemble into a complex of at least 19 chains with a combined molecular mass of around 1.2 MDa. Within this complex, directly interacts with ANAPC2. Post-translationally, autoubiquitinated by the APC/C complex, leading to its degradation by the proteasome. Its degradation plays a central role in APC/C regulation, allowing cyclin-A accumulation before S phase entry. APC/C substrates inhibit the autoubiquitination of UBE2C/UBCH10 but not its E2 function, hence APC/C remaining active until its substrates have been destroyed.

It carries out the reaction S-ubiquitinyl-[E1 ubiquitin-activating enzyme]-L-cysteine + [E2 ubiquitin-conjugating enzyme]-L-cysteine = [E1 ubiquitin-activating enzyme]-L-cysteine + S-ubiquitinyl-[E2 ubiquitin-conjugating enzyme]-L-cysteine.. The enzyme catalyses S-ubiquitinyl-[E1 ubiquitin-activating enzyme]-L-cysteine + [acceptor protein]-L-lysine = [E1 ubiquitin-activating enzyme]-L-cysteine + N(6)-monoubiquitinyl-[acceptor protein]-L-lysine.. Its pathway is protein modification; protein ubiquitination. Its function is as follows. Accepts ubiquitin from the E1 complex and catalyzes its covalent attachment to other proteins. In vitro catalyzes 'Lys-11'- and 'Lys-48'-linked polyubiquitination. Acts as an essential factor of the anaphase promoting complex/cyclosome (APC/C), a cell cycle-regulated ubiquitin ligase that controls progression through mitosis. Acts by initiating 'Lys-11'-linked polyubiquitin chains on APC/C substrates, leading to the degradation of APC/C substrates by the proteasome and promoting mitotic exit. This is Ubiquitin-conjugating enzyme E2 C (UBE2C) from Homo sapiens (Human).